The sequence spans 341 residues: Farnesyl pyrophosphate synthase (341 aa).

Residues Lys48, Arg51, and Gln86 each contribute to the isopentenyl diphosphate site. 2 residues coordinate Mg(2+): Asp93 and Asp97. Arg102 is a dimethylallyl diphosphate binding site. Arg103 is a binding site for isopentenyl diphosphate. Dimethylallyl diphosphate-binding residues include Lys190, Thr191, Gln229, and Lys246.

Belongs to the FPP/GGPP synthase family. Mg(2+) is required as a cofactor.

It is found in the cytoplasm. It catalyses the reaction isopentenyl diphosphate + dimethylallyl diphosphate = (2E)-geranyl diphosphate + diphosphate. It carries out the reaction isopentenyl diphosphate + (2E)-geranyl diphosphate = (2E,6E)-farnesyl diphosphate + diphosphate. Its pathway is isoprenoid biosynthesis; farnesyl diphosphate biosynthesis; farnesyl diphosphate from geranyl diphosphate and isopentenyl diphosphate: step 1/1. It participates in isoprenoid biosynthesis; geranyl diphosphate biosynthesis; geranyl diphosphate from dimethylallyl diphosphate and isopentenyl diphosphate: step 1/1. In terms of biological role, catalyzes the sequential condensation of isopentenyl pyrophosphate with the allylic pyrophosphates, dimethylallyl pyrophosphate, and then with the resultant geranylpyrophosphate to the ultimate product farnesyl pyrophosphate. The chain is Farnesyl pyrophosphate synthase (FPS1) from Helianthus annuus (Common sunflower).